The sequence spans 175 residues: uncharacterized protein (175 aa).

Low complexity predominate over residues Leu35–Asp56. Positions Leu35 to Asn70 are disordered. Transmembrane regions (helical) follow at residues Ile106–Tyr126 and Tyr132–Phe152.

The protein localises to the membrane. This is an uncharacterized protein from Dictyostelium discoideum (Social amoeba).